We begin with the raw amino-acid sequence, 182 residues long: GTP cyclohydrolase 1 (182 aa).

Zn(2+) contacts are provided by Cys-73, His-76, and Cys-144.

Belongs to the GTP cyclohydrolase I family. In terms of assembly, homomer.

The enzyme catalyses GTP + H2O = 7,8-dihydroneopterin 3'-triphosphate + formate + H(+). It functions in the pathway cofactor biosynthesis; 7,8-dihydroneopterin triphosphate biosynthesis; 7,8-dihydroneopterin triphosphate from GTP: step 1/1. This chain is GTP cyclohydrolase 1, found in Hydrogenobaculum sp. (strain Y04AAS1).